Here is a 169-residue protein sequence, read N- to C-terminus: MNYFDLFSLPVIFPIDQTRLSETYRELQKQYHPDKFVMQNDSERLRAMQKSTEINDAYQTLKNSCLRAQYLLLLAGLDIALEHKTLQDTAFLVQQMEWRETIAAFTEDDQDKMDEFALQLQQQVAGLESKIEVQLQNDELEATADSIRQLKFMLKLQIELVLIEEKLFD.

The J domain maps to asparagine 2–leucine 74.

It belongs to the HscB family. In terms of assembly, interacts with HscA and stimulates its ATPase activity.

Functionally, co-chaperone involved in the maturation of iron-sulfur cluster-containing proteins. Seems to help targeting proteins to be folded toward HscA. This chain is Co-chaperone protein HscB homolog, found in Psychromonas ingrahamii (strain DSM 17664 / CCUG 51855 / 37).